Reading from the N-terminus, the 249-residue chain is 5'-nucleotidase SurE (249 aa).

A divalent metal cation-binding residues include D8, D9, S39, and N91.

It belongs to the SurE nucleotidase family. A divalent metal cation is required as a cofactor.

It localises to the cytoplasm. The catalysed reaction is a ribonucleoside 5'-phosphate + H2O = a ribonucleoside + phosphate. Its function is as follows. Nucleotidase that shows phosphatase activity on nucleoside 5'-monophosphates. The sequence is that of 5'-nucleotidase SurE from Haemophilus influenzae (strain PittGG).